The chain runs to 158 residues: Pathogenesis-related protein 1 (158 aa).

It belongs to the BetVI family.

It localises to the cytoplasm. The sequence is that of Pathogenesis-related protein 1 (PR1) from Asparagus officinalis (Garden asparagus).